The following is a 628-amino-acid chain: E3 SUMO-protein ligase PIAS3 (628 aa).

The tract at residues 1 to 200 (MAELGELKHM…QLRFCLCETS (200 aa)) is interaction with CCAR2. Residues 11–45 (VMSFRVSELQVLLGFAGRNKSGRKHELLAKALHLL) form the SAP domain. The LXXLL motif signature appears at 19–23 (LQVLL). Glycyl lysine isopeptide (Lys-Gly) (interchain with G-Cter in SUMO2) cross-links involve residues K46, K56, K230, and K307. The 166-residue stretch at 115–280 (MHPPLPQPVH…SLSVYLVRQL (166 aa)) folds into the PINIT domain. The SP-RING-type zinc finger occupies 312–393 (PDSEVATTSL…FMEILSSCSD (82 aa)). C343, H345, C366, and C369 together coordinate Zn(2+). The tract at residues 450 to 460 (LTIESSSDEED) is SUMO1-binding. Glycyl lysine isopeptide (Lys-Gly) (interchain with G-Cter in SUMO2) cross-links involve residues K466 and K482. A disordered region spans residues 597–617 (VAPGGALREGHGGPLPSGPSL).

It belongs to the PIAS family. As to quaternary structure, monomer. Binds SUMO1 and UBE2I. Interacts with BCL11A, HMGA2, IRF1, MITF and NCOA2. Interacts with STAT5; the interaction occurs on stimulation by PRL. Interacts with GFI1; the interaction relieves the inhibitory effect of PIAS3 on STAT3-mediated transcriptional activity. Interacts with AR, PLAG1 and ZFHX3. Interacts with STAT3; the interaction occurs on stimulation by IL6, CNTF or OSM and inhibits the DNA binding activity of STAT3. Interacts with MTA1. Interacts with CCAR2 (via N-terminus). Interacts with TRIM8. Interacts with PRDM1/Blimp-1. In terms of processing, sumoylated. In terms of tissue distribution, widely expressed.

It is found in the cytoplasm. It localises to the nucleus. The protein resides in the nucleus speckle. Its pathway is protein modification; protein sumoylation. Its function is as follows. Functions as an E3-type small ubiquitin-like modifier (SUMO) ligase, stabilizing the interaction between UBE2I and the substrate, and as a SUMO-tethering factor. Plays a crucial role as a transcriptional coregulation in various cellular pathways, including the STAT pathway and the steroid hormone signaling pathway. Involved in regulating STAT3 signaling via inhibiting STAT3 DNA-binding and suppressing cell growth. Enhances the sumoylation of MTA1 and may participate in its paralog-selective sumoylation. Sumoylates CCAR2 which promotes its interaction with SIRT1. Diminishes the sumoylation of ZFHX3 by preventing the colocalization of ZFHX3 with SUMO1 in the nucleus. The sequence is that of E3 SUMO-protein ligase PIAS3 (PIAS3) from Homo sapiens (Human).